The following is a 209-amino-acid chain: N-(5'-phosphoribosyl)anthranilate isomerase (209 aa).

This sequence belongs to the TrpF family.

The enzyme catalyses N-(5-phospho-beta-D-ribosyl)anthranilate = 1-(2-carboxyphenylamino)-1-deoxy-D-ribulose 5-phosphate. It participates in amino-acid biosynthesis; L-tryptophan biosynthesis; L-tryptophan from chorismate: step 3/5. This is N-(5'-phosphoribosyl)anthranilate isomerase from Pyrobaculum islandicum (strain DSM 4184 / JCM 9189 / GEO3).